We begin with the raw amino-acid sequence, 72 residues long: Translation initiation factor IF-1 (72 aa).

The region spanning 1 to 72 (MSKEENIEMQ…TKGRIIFRSR (72 aa)) is the S1-like domain.

This sequence belongs to the IF-1 family. As to quaternary structure, component of the 30S ribosomal translation pre-initiation complex which assembles on the 30S ribosome in the order IF-2 and IF-3, IF-1 and N-formylmethionyl-tRNA(fMet); mRNA recruitment can occur at any time during PIC assembly.

The protein resides in the cytoplasm. In terms of biological role, one of the essential components for the initiation of protein synthesis. Stabilizes the binding of IF-2 and IF-3 on the 30S subunit to which N-formylmethionyl-tRNA(fMet) subsequently binds. Helps modulate mRNA selection, yielding the 30S pre-initiation complex (PIC). Upon addition of the 50S ribosomal subunit IF-1, IF-2 and IF-3 are released leaving the mature 70S translation initiation complex. In Buchnera aphidicola subsp. Acyrthosiphon pisum (strain APS) (Acyrthosiphon pisum symbiotic bacterium), this protein is Translation initiation factor IF-1.